We begin with the raw amino-acid sequence, 315 residues long: Methionyl-tRNA formyltransferase (315 aa).

Residue Ser113–Pro116 participates in (6S)-5,6,7,8-tetrahydrofolate binding.

It belongs to the Fmt family.

The catalysed reaction is L-methionyl-tRNA(fMet) + (6R)-10-formyltetrahydrofolate = N-formyl-L-methionyl-tRNA(fMet) + (6S)-5,6,7,8-tetrahydrofolate + H(+). Functionally, attaches a formyl group to the free amino group of methionyl-tRNA(fMet). The formyl group appears to play a dual role in the initiator identity of N-formylmethionyl-tRNA by promoting its recognition by IF2 and preventing the misappropriation of this tRNA by the elongation apparatus. In Vibrio parahaemolyticus serotype O3:K6 (strain RIMD 2210633), this protein is Methionyl-tRNA formyltransferase.